The sequence spans 213 residues: MAAPAASGLSRQVRSFSTSVVRPFAKLVRPPVQVYGIEGRYATALYSAASKEKKLDQVEKELLRVGQLLKDPKVSLAVLNPYIKRTVKVKSLNDITKREKFSPLTANLMNLLAENGRLGNTQGIISAFSTIMSVHRGEVPCTVTTASPLDDAVLSELKTVLKSFLSPNQILKLEIKTDPSIMGGMIVRIGEKYVDMSAKSKIQKLSKAMREML.

The N-terminal 23 residues, 1-23, are a transit peptide targeting the mitochondrion; that stretch reads MAAPAASGLSRQVRSFSTSVVRP. Residues 5–23 carry the SIFI-degron motif; the sequence is AASGLSRQVRSFSTSVVRP. N6-acetyllysine occurs at positions 54, 60, 70, and 73. Position 90 is an N6-succinyllysine (K90). 3 positions are modified to N6-acetyllysine; alternate: K100, K158, and K162. An N6-succinyllysine; alternate mark is found at K100, K158, and K162. Residues K172, K176, and K192 each carry the N6-acetyllysine modification. K199 is modified (N6-succinyllysine).

The protein belongs to the ATPase delta chain family. In terms of assembly, component of the ATP synthase complex composed at least of ATP5F1A/subunit alpha, ATP5F1B/subunit beta, ATP5MC1/subunit c (homooctomer), MT-ATP6/subunit a, MT-ATP8/subunit 8, ATP5ME/subunit e, ATP5MF/subunit f, ATP5MG/subunit g, ATP5MK/subunit k, ATP5MJ/subunit j, ATP5F1C/subunit gamma, ATP5F1D/subunit delta, ATP5F1E/subunit epsilon, ATP5PF/subunit F6, ATP5PB/subunit b, ATP5PD/subunit d, ATP5PO/subunit OSCP. ATP synthase complex consists of a soluble F(1) head domain (subunits alpha(3) and beta(3)) - the catalytic core - and a membrane F(0) domain - the membrane proton channel (subunits c, a, 8, e, f, g, k and j). These two domains are linked by a central stalk (subunits gamma, delta, and epsilon) rotating inside the F1 region and a stationary peripheral stalk (subunits F6, b, d, and OSCP). Post-translationally, acetylation of Lys-70 and Lys-158 is observed in liver mitochondria from fasted mice but not from fed mice. Acetylation at Lys-162 decreases ATP production. Deacetylated by SIRT3. In terms of processing, in response to mitochondrial stress, the precursor protein is ubiquitinated by the SIFI complex in the cytoplasm before mitochondrial import, leading to its degradation. Within the SIFI complex, UBR4 initiates ubiquitin chain that are further elongated or branched by KCMF1.

It is found in the mitochondrion. Its subcellular location is the mitochondrion inner membrane. Subunit OSCP, of the mitochondrial membrane ATP synthase complex (F(1)F(0) ATP synthase or Complex V) that produces ATP from ADP in the presence of a proton gradient across the membrane which is generated by electron transport complexes of the respiratory chain. ATP synthase complex consist of a soluble F(1) head domain - the catalytic core - and a membrane F(1) domain - the membrane proton channel. These two domains are linked by a central stalk rotating inside the F(1) region and a stationary peripheral stalk. During catalysis, ATP synthesis in the catalytic domain of F(1) is coupled via a rotary mechanism of the central stalk subunits to proton translocation. In vivo, can only synthesize ATP although its ATP hydrolase activity can be activated artificially in vitro. Part of the complex F(0) domain. Part of the complex F(0) domain and the peripheric stalk, which acts as a stator to hold the catalytic alpha(3)beta(3) subcomplex and subunit a/ATP6 static relative to the rotary elements. The chain is ATP synthase peripheral stalk subunit OSCP, mitochondrial from Mus musculus (Mouse).